A 616-amino-acid chain; its full sequence is Dihydroxy-acid dehydratase (616 aa).

D81 serves as a coordination point for Mg(2+). Residue C122 coordinates [2Fe-2S] cluster. The Mg(2+) site is built by D123 and K124. K124 bears the N6-carboxylysine mark. [2Fe-2S] cluster is bound at residue C195. E491 lines the Mg(2+) pocket. S517 (proton acceptor) is an active-site residue.

Belongs to the IlvD/Edd family. In terms of assembly, homodimer. It depends on [2Fe-2S] cluster as a cofactor. Mg(2+) serves as cofactor.

The enzyme catalyses (2R)-2,3-dihydroxy-3-methylbutanoate = 3-methyl-2-oxobutanoate + H2O. The catalysed reaction is (2R,3R)-2,3-dihydroxy-3-methylpentanoate = (S)-3-methyl-2-oxopentanoate + H2O. It participates in amino-acid biosynthesis; L-isoleucine biosynthesis; L-isoleucine from 2-oxobutanoate: step 3/4. Its pathway is amino-acid biosynthesis; L-valine biosynthesis; L-valine from pyruvate: step 3/4. Its function is as follows. Functions in the biosynthesis of branched-chain amino acids. Catalyzes the dehydration of (2R,3R)-2,3-dihydroxy-3-methylpentanoate (2,3-dihydroxy-3-methylvalerate) into 2-oxo-3-methylpentanoate (2-oxo-3-methylvalerate) and of (2R)-2,3-dihydroxy-3-methylbutanoate (2,3-dihydroxyisovalerate) into 2-oxo-3-methylbutanoate (2-oxoisovalerate), the penultimate precursor to L-isoleucine and L-valine, respectively. The polypeptide is Dihydroxy-acid dehydratase (Salmonella dublin (strain CT_02021853)).